We begin with the raw amino-acid sequence, 229 residues long: Extracellular endonuclease (229 aa).

The N-terminal stretch at 1–19 (MSARFIAVFCLFFTVTAHA) is a signal peptide. Residues 69–95 (RADASNGNTSSRPGRSGISASAGKPVG) form a disordered region. The segment covering 71–81 (DASNGNTSSRP) has biased composition (polar residues).

Belongs to the EndA/NucM nuclease family.

It localises to the secreted. This is Extracellular endonuclease (endX) from Pseudomonas fluorescens biotype A.